A 341-amino-acid polypeptide reads, in one-letter code: Protein RecA, plasmid (341 aa).

ATP is bound at residue G80 to T87.

It belongs to the RecA family.

The protein resides in the cytoplasm. Functionally, can catalyze the hydrolysis of ATP in the presence of single-stranded DNA, the ATP-dependent uptake of single-stranded DNA by duplex DNA, and the ATP-dependent hybridization of homologous single-stranded DNAs. It interacts with LexA causing its activation and leading to its autocatalytic cleavage. The chain is Protein RecA, plasmid from Lactococcus lactis subsp. lactis (Streptococcus lactis).